The sequence spans 696 residues: SEC14 domain and spectrin repeat-containing protein 1 (696 aa).

The CRAL-TRIO domain occupies methionine 1–histidine 153. Spectrin repeat units lie at residues glutamate 275–glutamine 378, leucine 381–leucine 494, and phenylalanine 500–glutamate 602.

The protein belongs to the SOLO family. In terms of assembly, interacts (via the spectrin 1 repeat) with TRPC4 and TRPC5 (via CIRB domain). Interacts with CTNNB1. As to expression, broad expression. High expression in thalamus and brain. Significantly expressed in vasculature.

In terms of biological role, may act as the primary docking protein directing membrane turnover and assembly of the transient receptor potential channels TRPC4 and TRPC5. Binds phospholipids such as phosphatidylinositol monophosphates, phosphatidylinositol diphosphates (PIP2s) and phosphatidic acid, but not less polar lipids including phosphatidylcholine, phosphatidylserine, and phosphatidylinositol. The binding to PIP2s is calcium dependent. Might be involved in the plasma membrane localization of CTNNB1. The protein is SEC14 domain and spectrin repeat-containing protein 1 (SESTD1) of Homo sapiens (Human).